Here is a 508-residue protein sequence, read N- to C-terminus: Photosystem II CP47 reaction center protein (508 aa).

6 helical membrane passes run 21–36, 101–115, 140–156, 203–218, 237–252, and 457–472; these read SVHI…WAGS, IAFS…IWHW, GIHL…FGAF, IAAG…FHLS, VLSS…AFVV, and SFAL…HGAR.

This sequence belongs to the PsbB/PsbC family. PsbB subfamily. PSII is composed of 1 copy each of membrane proteins PsbA, PsbB, PsbC, PsbD, PsbE, PsbF, PsbH, PsbI, PsbJ, PsbK, PsbL, PsbM, PsbT, PsbX, PsbY, PsbZ, Psb30/Ycf12, at least 3 peripheral proteins of the oxygen-evolving complex and a large number of cofactors. It forms dimeric complexes. Binds multiple chlorophylls. PSII binds additional chlorophylls, carotenoids and specific lipids. is required as a cofactor.

The protein localises to the plastid membrane. Its function is as follows. One of the components of the core complex of photosystem II (PSII). It binds chlorophyll and helps catalyze the primary light-induced photochemical processes of PSII. PSII is a light-driven water:plastoquinone oxidoreductase, using light energy to abstract electrons from H(2)O, generating O(2) and a proton gradient subsequently used for ATP formation. The sequence is that of Photosystem II CP47 reaction center protein from Cuscuta reflexa (Southern Asian dodder).